The sequence spans 225 residues: Heptaprenylglyceryl phosphate synthase (225 aa).

Lys-6 serves as a coordination point for sn-glycerol 1-phosphate. Mg(2+)-binding residues include Asp-8 and Thr-34. Sn-glycerol 1-phosphate-binding positions include 153–158, Gly-183, and 203–204; these read YVEYSG and GN.

This sequence belongs to the GGGP/HepGP synthase family. Group I subfamily. In terms of assembly, homodimer. Mg(2+) serves as cofactor.

It catalyses the reaction sn-glycerol 1-phosphate + all-trans-heptaprenyl diphosphate = 3-heptaprenyl-sn-glycero-1-phosphate + diphosphate. The protein operates within membrane lipid metabolism; glycerophospholipid metabolism. Its function is as follows. Prenyltransferase that catalyzes in vivo the transfer of the heptaprenyl moiety of heptaprenyl pyrophosphate (HepPP; 35 carbon atoms) to the C3 hydroxyl of sn-glycerol-1-phosphate (G1P), producing heptaprenylglyceryl phosphate (HepGP). This reaction is an ether-bond-formation step in the biosynthesis of archaea-type G1P-based membrane lipids found in Bacillales. To a much lesser extent, is also able to use geranylgeranyl diphosphate (GGPP; C20) as the prenyl donor. In Listeria monocytogenes serovar 1/2a (strain ATCC BAA-679 / EGD-e), this protein is Heptaprenylglyceryl phosphate synthase.